The following is a 70-amino-acid chain: Small ribosomal subunit protein bS18c (70 aa).

The protein belongs to the bacterial ribosomal protein bS18 family. As to quaternary structure, part of the 30S ribosomal subunit.

The protein resides in the plastid. The protein localises to the chloroplast. The sequence is that of Small ribosomal subunit protein bS18c from Gracilaria tenuistipitata var. liui (Red alga).